The primary structure comprises 542 residues: Quinidine resistance protein 2 (542 aa).

The Cytoplasmic portion of the chain corresponds to Met-1–Cys-67. Residue Ser-21 is modified to Phosphoserine. The residue at position 38 (Thr-38) is a Phosphothreonine. Position 40 is a phosphoserine (Ser-40). Residues Ala-68 to Ile-88 form a helical membrane-spanning segment. The Extracellular portion of the chain corresponds to Glu-89–Asn-100. A helical membrane pass occupies residues Val-101–Ala-121. The Cytoplasmic portion of the chain corresponds to Asp-122–Arg-127. A helical membrane pass occupies residues Pro-128–Gln-148. Residue Thr-149 is a topological domain, extracellular. The helical transmembrane segment at Tyr-150–Ile-170 threads the bilayer. Topologically, residues Asn-171 to Tyr-187 are cytoplasmic. The chain crosses the membrane as a helical span at residues Val-188–Gly-208. Over Leu-209–Arg-216 the chain is Extracellular. A helical transmembrane segment spans residues Ala-217–Leu-237. The Cytoplasmic segment spans residues Pro-238–Glu-300. The helical transmembrane segment at Ile-301 to Ala-321 threads the bilayer. Residues Leu-322–Thr-333 are Extracellular-facing. Residues Val-334 to Ile-354 traverse the membrane as a helical segment. Residues Ala-355–Pro-413 are Cytoplasmic-facing. Residues Ala-414 to Val-434 traverse the membrane as a helical segment. Residues Lys-435 to Pro-437 are Extracellular-facing. Residues Leu-438–Phe-458 traverse the membrane as a helical segment. Residues Ser-459 to Ser-472 lie on the Cytoplasmic side of the membrane. A helical membrane pass occupies residues Thr-473 to Leu-493. Over Ser-494–Gly-503 the chain is Extracellular. Residues Gly-504–Leu-524 traverse the membrane as a helical segment. Residues Arg-525 to Asn-542 lie on the Cytoplasmic side of the membrane.

This sequence belongs to the major facilitator superfamily. CAR1 family.

It is found in the cell membrane. Multidrug resistance transporter involved in resistance and adaptation to quinidine and to the herbicide barban (4-chloro-2-butynyl [3-chlorophenyl] carbamate). Implicated in potassium uptake. In Saccharomyces cerevisiae (strain ATCC 204508 / S288c) (Baker's yeast), this protein is Quinidine resistance protein 2 (QDR2).